A 345-amino-acid chain; its full sequence is MAAAFDREKALEHAIAQIERAHGKGSLMRLGDEARAPIDVIPTGSIALDVALGIGGLPRGRIVEIYGPESSGKTTLALHAVANAQRAGGIAAFIDAEHALDPEYAKKLGVDTDNLLVSQPDTGEQALEIADTLIRSGAIDVVVIDSVAALVPRAEIEGEMGDSHVGLQARLMSQALRKITGALSHSGTTAIFINQLREKVGVFFGSPETTTGGKALKFYASIRLDVRRIDTIKEGQEAIGNRTRVKVVKNKCASPFRQAEFDILYNVGISREGSLIDMGVEHGIIRKSGAWYTYEGDQLGQGKENARNFLRENPDLADEIEKKIKEKLGIGPRVDAPIDLTVVER.

Position 67–74 (67–74) interacts with ATP; it reads GPESSGKT.

The protein belongs to the RecA family.

Its subcellular location is the cytoplasm. In terms of biological role, can catalyze the hydrolysis of ATP in the presence of single-stranded DNA, the ATP-dependent uptake of single-stranded DNA by duplex DNA, and the ATP-dependent hybridization of homologous single-stranded DNAs. It interacts with LexA causing its activation and leading to its autocatalytic cleavage. This chain is Protein RecA, found in Acidothermus cellulolyticus (strain ATCC 43068 / DSM 8971 / 11B).